Consider the following 188-residue polypeptide: GMP synthase [glutamine-hydrolyzing] subunit A (188 aa).

The region spanning 1–188 (MIVILDNGGQ…FCKVCGYKFE (188 aa)) is the Glutamine amidotransferase type-1 domain. C76 serves as the catalytic Nucleophile. Catalysis depends on residues H163 and E165.

As to quaternary structure, heterodimer composed of a glutamine amidotransferase subunit (A) and a GMP-binding subunit (B).

The enzyme catalyses XMP + L-glutamine + ATP + H2O = GMP + L-glutamate + AMP + diphosphate + 2 H(+). The protein operates within purine metabolism; GMP biosynthesis; GMP from XMP (L-Gln route): step 1/1. In terms of biological role, catalyzes the synthesis of GMP from XMP. The protein is GMP synthase [glutamine-hydrolyzing] subunit A of Methanocaldococcus jannaschii (strain ATCC 43067 / DSM 2661 / JAL-1 / JCM 10045 / NBRC 100440) (Methanococcus jannaschii).